A 187-amino-acid polypeptide reads, in one-letter code: Large ribosomal subunit protein eL18A (187 aa).

Phosphoserine occurs at positions 16 and 64. Residues Thr-87, Thr-89, and Thr-134 each carry the phosphothreonine modification. Position 136 is a phosphoserine (Ser-136). Thr-138 bears the Phosphothreonine mark.

Belongs to the eukaryotic ribosomal protein eL18 family. Component of the large ribosomal subunit (LSU). Mature yeast ribosomes consist of a small (40S) and a large (60S) subunit. The 40S small subunit contains 1 molecule of ribosomal RNA (18S rRNA) and at least 33 different proteins. The large 60S subunit contains 3 rRNA molecules (25S, 5.8S and 5S rRNA) and at least 46 different proteins. eL18 interacts with NAP1.

The protein resides in the cytoplasm. Its function is as follows. Component of the ribosome, a large ribonucleoprotein complex responsible for the synthesis of proteins in the cell. The small ribosomal subunit (SSU) binds messenger RNAs (mRNAs) and translates the encoded message by selecting cognate aminoacyl-transfer RNA (tRNA) molecules. The large subunit (LSU) contains the ribosomal catalytic site termed the peptidyl transferase center (PTC), which catalyzes the formation of peptide bonds, thereby polymerizing the amino acids delivered by tRNAs into a polypeptide chain. The nascent polypeptides leave the ribosome through a tunnel in the LSU and interact with protein factors that function in enzymatic processing, targeting, and the membrane insertion of nascent chains at the exit of the ribosomal tunnel. This is Large ribosomal subunit protein eL18A (rpl1801) from Schizosaccharomyces pombe (strain 972 / ATCC 24843) (Fission yeast).